Consider the following 73-residue polypeptide: MASNKVSFIFILFLCVLSTAEFGEAQNPRGRKCEDPNGVDQKAKCYIYCNEQGFLGGSCQGYTNHYMCECYVG.

Positions 1 to 25 (MASNKVSFIFILFLCVLSTAEFGEA) are cleaved as a signal peptide. Intrachain disulfides connect cysteine 33-cysteine 59, cysteine 45-cysteine 68, and cysteine 49-cysteine 70.

The protein belongs to the DEFL family.

Its subcellular location is the secreted. In Arabidopsis thaliana (Mouse-ear cress), this protein is Putative defensin-like protein 33.